A 309-amino-acid polypeptide reads, in one-letter code: Vomeronasal type-1 receptor 46 (309 aa).

The Extracellular portion of the chain corresponds to 1–20; the sequence is MNKANIFCTDTNMKVILFSE. A helical transmembrane segment spans residues 21 to 41; it reads VSVGISANSILFISHLCMFLG. Over 42–50 the chain is Cytoplasmic; sequence ESRPKPIDL. The helical transmembrane segment at 51 to 71 threads the bilayer; that stretch reads YIAFFSLTHLMLLVTMGLIAV. The Extracellular portion of the chain corresponds to 72–85; sequence DMFMPGGRWDSTTC. Residues C85 and C171 are joined by a disulfide bond. The helical transmembrane segment at 86 to 106 threads the bilayer; it reads TFLMYLHIVLRGPTLCATCLL. Over 107 to 134 the chain is Cytoplasmic; sequence NVLWTITLSPRNSCLTKFKHKSPHHISG. The chain crosses the membrane as a helical span at residues 135-155; the sequence is AFLFLCVLYMSLSSELLSITA. Over 156 to 192 the chain is Extracellular; sequence SLNLTSENFLYVSQSCSILPMSYSIKSMFSTKMAIRE. N158 is a glycosylation site (N-linked (GlcNAc...) asparagine). Residues 193-213 form a helical membrane-spanning segment; it reads AFLIGLMVLSSGYMVALLWSH. Residues 214-237 lie on the Cytoplasmic side of the membrane; it reads KKQAQHLHSNSLSLKASPEQRATR. A helical membrane pass occupies residues 238-258; that stretch reads TIMLLMSFFVVFYILDSVIFY. Residues 259-267 lie on the Extracellular side of the membrane; sequence SRMKFKDDS. Residues 268–288 form a helical membrane-spanning segment; the sequence is IFVCVQIIVSHSYVTVSPFVF. Topologically, residues 289-309 are cytoplasmic; that stretch reads ICTEKHIIKFFWSLCGRIVNI.

Belongs to the G-protein coupled receptor 1 family.

The protein resides in the cell membrane. In terms of biological role, putative pheromone receptor implicated in the regulation of social and reproductive behavior. The chain is Vomeronasal type-1 receptor 46 (Vmn1r46) from Mus musculus (Mouse).